Consider the following 520-residue polypeptide: MENTDVFLGLHDFLERMRKPSAGDFVKSIKSFIVSFSNNAPDPEKDCAMVQEFFSKMEAAFRAHPLWSGCSEEELDSAGDGLEKYVMTKLFTRVFASNTEEVIADEKLFQKMSLVQQFISPENLDIQPTFQNESSWLLAQKELQKINMYKAPRDKLVCILNCCKVINNLLLNASIASNENAPGADEFLPVLIYVTIKANPPQLHSNLLYIQRYRRESKLVGEAAYFFTNILSAESFISNIDAKSISLDEAEFEKNMESARARISGLDSQTYQTGHGSAPPPRDESTLQKTQSLNPKRENTLFQSKSSDSLSGTNELLNINSETPMKKAESISDLENKGATLLKDTEPSKVFQEYPYIFASAGDLRIGDVEGLLNSYKQLVFKYVCLTKGLGDGTSLAPSSSPLQASSGFNTSKESEDHRRSSSDVQMTKETDRSVDDLIRALHGEGEDVNNLSDVKHEEYGAMLVEGKDEERDSKVQGEVDAKDIELMKQIPKREGDNSSSRPAEDEDVGSKQPVTEASE.

In terms of domain architecture, VPS9 spans 102–246 (VIADEKLFQK…ISNIDAKSIS (145 aa)). GTP is bound by residues asparagine 180 and aspartate 185. 3 disordered regions span residues 267-331 (DSQT…AESI), 396-433 (LAPS…ETDR), and 464-520 (LVEG…EASE). Polar residues predominate over residues 287–323 (LQKTQSLNPKRENTLFQSKSSDSLSGTNELLNINSET). Serine 330 bears the Phosphoserine mark. The segment covering 396–407 (LAPSSSPLQASS) has biased composition (low complexity). Basic and acidic residues-rich tracts occupy residues 413–433 (KESE…ETDR) and 464–497 (LVEG…REGD).

As to quaternary structure, homodimer. The homodimer interacts with RABF2B. Interacts with RABF1 and RABF2A. In terms of tissue distribution, widely expressed.

Functions as a guanine nucleotide exchange factor (GEF) for Rab small GTPases. Activates specifically RABF1, RABF2A and RABF2B proteins. Required for early stages of embryogenesis, cytokinesis, embryogenesis, and organ development. Is essential for the establishment or maintenance of the polar localization of the auxin efflux carrier PIN1. The protein is Vacuolar protein sorting-associated protein 9A of Arabidopsis thaliana (Mouse-ear cress).